Consider the following 393-residue polypeptide: Digeranylgeranylglycerophospholipid reductase (393 aa).

FAD contacts are provided by Ala-13, Asp-32, Cys-43, Ala-44, Gly-46, Arg-95, Val-119, Asp-274, and Gly-286. A 2,3-bis-O-(geranylgeranyl)-sn-glycerol 1-phospholipid-binding residues include Lys-327 and Gly-363.

Belongs to the geranylgeranyl reductase family. DGGGPL reductase subfamily. FAD is required as a cofactor.

The catalysed reaction is a 2,3-bis-O-phytanyl-sn-glycerol 1-phospholipid + 8 A = a 2,3-bis-O-(geranylgeranyl)-sn-glycerol 1-phospholipid + 8 AH2. It carries out the reaction 2,3-bis-O-(phytanyl)-sn-glycerol 1-phosphate + 8 A = 2,3-bis-O-(geranylgeranyl)-sn-glycerol 1-phosphate + 8 AH2. It catalyses the reaction CDP-2,3-bis-O-(geranylgeranyl)-sn-glycerol + 8 AH2 = CDP-2,3-bis-O-(phytanyl)-sn-glycerol + 8 A. The enzyme catalyses archaetidylserine + 8 AH2 = 2,3-bis-O-phytanyl-sn-glycero-3-phospho-L-serine + 8 A. Its pathway is membrane lipid metabolism; glycerophospholipid metabolism. Its function is as follows. Is involved in the reduction of 2,3-digeranylgeranylglycerophospholipids (unsaturated archaeols) into 2,3-diphytanylglycerophospholipids (saturated archaeols) in the biosynthesis of archaeal membrane lipids. Catalyzes the formation of archaetidic acid (2,3-di-O-phytanyl-sn-glyceryl phosphate) from 2,3-di-O-geranylgeranylglyceryl phosphate (DGGGP) via the hydrogenation of each double bond of the isoprenoid chains. Is also probably able to reduce double bonds of geranyl groups in CDP-2,3-bis-O-(geranylgeranyl)-sn-glycerol and archaetidylserine, thus acting at various stages in the biosynthesis of archaeal membrane lipids. The sequence is that of Digeranylgeranylglycerophospholipid reductase from Pyrococcus furiosus (strain ATCC 43587 / DSM 3638 / JCM 8422 / Vc1).